Here is an 886-residue protein sequence, read N- to C-terminus: Chitin synthase 3 (886 aa).

Disordered stretches follow at residues 1–70 and 86–138; these read MQQG…YQTD and PYEP…AGGG. The segment covering 7 to 17 has biased composition (basic and acidic residues); it reads LDDRPYGRPEQ. Positions 37–56 are enriched in polar residues; that stretch reads PSDQLQLNAAQSVDNLSRNS. Residue Asn51 is glycosylated (N-linked (GlcNAc...) asparagine). A compositionally biased stretch (basic and acidic residues) spans 106 to 122; that stretch reads YDHDDLRPMLPHQDSHA. An N-linked (GlcNAc...) asparagine glycan is attached at Asn196. The next 7 membrane-spanning stretches (helical) occupy residues 428-448, 526-546, 556-576, 602-622, 637-657, 683-703, and 712-732; these read SAFG…YVAL, RWLN…YQFF, VMLF…WFAV, ILGV…FVLS, MVYF…FIAV, TLIV…FLMF, and FVQY…YAFC. A disordered region spans residues 745–768; the sequence is DQAEKLPSVSTKDGSGKTDLPDES. 2 helical membrane-spanning segments follow: residues 813-833 and 858-878; these read VLAW…AAGL and VVLW…MWFL.

The protein belongs to the chitin synthase family. Class I subfamily.

Its subcellular location is the cell membrane. The catalysed reaction is [(1-&gt;4)-N-acetyl-beta-D-glucosaminyl](n) + UDP-N-acetyl-alpha-D-glucosamine = [(1-&gt;4)-N-acetyl-beta-D-glucosaminyl](n+1) + UDP + H(+). Polymerizes chitin, a structural polymer of the cell wall and septum, by transferring the sugar moiety of UDP-GlcNAc to the non-reducing end of the growing chitin polymer. Involved in tolerance to hyperosmotic conditions. CHS3 is the only V.dahliae chitin synthase that is not involved in virulence. The protein is Chitin synthase 3 of Verticillium dahliae (strain VdLs.17 / ATCC MYA-4575 / FGSC 10137) (Verticillium wilt).